Consider the following 87-residue polypeptide: Small ribosomal subunit protein bS20 (87 aa).

The segment at 1–27 (MANSVQATKRARQAEKHRQHNAGMRAA) is disordered. The span at 9 to 20 (KRARQAEKHRQH) shows a compositional bias: basic residues.

It belongs to the bacterial ribosomal protein bS20 family.

In terms of biological role, binds directly to 16S ribosomal RNA. The polypeptide is Small ribosomal subunit protein bS20 (Hydrogenovibrio crunogenus (strain DSM 25203 / XCL-2) (Thiomicrospira crunogena)).